The following is a 272-amino-acid chain: uncharacterized protein (272 aa).

The active site involves Glu163.

This sequence belongs to the glycosyl hydrolase 25 family.

This is an uncharacterized protein from Escherichia coli O157:H7.